The primary structure comprises 902 residues: Histone-lysine N-methyltransferase CLF (902 aa).

Low complexity predominate over residues 1-14 (MASEASPSSSATRS). Disordered stretches follow at residues 1-33 (MASE…KEVS), 73-107 (SMER…SNNN), and 335-522 (GKTG…FMGE). Composition is skewed to basic and acidic residues over residues 15–33 (EPPK…KEVS) and 78–95 (GSCK…RDSP). A compositionally biased stretch (polar residues) spans 337 to 357 (TGTSSDGAGTKTTPTKFSSKL). A compositionally biased stretch (low complexity) spans 394–403 (DKVSSSPKVK). The segment covering 404 to 416 (GSGRRVGRKRNKN) has biased composition (basic residues). Positions 438–449 (SDSIASGSCSPS) are enriched in low complexity. The segment covering 459 to 473 (ATSSSQKHVKSGNSG) has biased composition (polar residues). The region spanning 531–581 (TNKLWRPLEKSLFDKGVEIFGMNSCLIARNLLSGFKSCWEVFQYMTCSENK) is the SANT domain. The 100-residue stretch at 638–737 (RKRITEKKDQ…SLGVPSQRGD (100 aa)) folds into the CXC domain. The SET domain occupies 752–867 (QRVLLGISDV…AGEELFYDYR (116 aa)). Position 866 (Tyr-866) interacts with S-adenosyl-L-methionine. Residues 875–890 (AWAKKPEAPGSKKDEN) are compositionally biased toward basic and acidic residues. Residues 875 to 902 (AWAKKPEAPGSKKDENVTPSVGRPKKLA) form a disordered region.

This sequence belongs to the class V-like SAM-binding methyltransferase superfamily. Histone-lysine methyltransferase family. EZ subfamily. Probable component of a PcG complex. In plants, PcG complexes are probably composed of a member of the EZ family (CLF or MEA), FIE, and a member of the VEFS family (FIS2, VRN2 or EMF2). Interacts with FIE. Interacts with RING1A. Binds to ALP1. Interacts with BLI. Binds to ATX1 in the nucleus. Interacts with EOL1. Interacts (via SANT domain) with HXK1 in the nucleus. In terms of tissue distribution, strongly expressed throughout the apical meristem, leaf primordia, and leaves of 7-8 day-old seedling. Weakly expressed in the vasculature of hypocotyl. Strongly expressed throughout the young stages 1 and 2 floral meristems that arose on the flanks of the apex. In stage 3 and 4 flowers, it is expressed in the emerging sepal primordia and in the dome of the floral meristem. During stages 6 and 7, it is strongly expressed in developing petal and stamen, and weakly expressed in the sepals. Late in floral development, at stage 12, it is weakly expressed in all floral whorls, and expressed at intermediate level in petals and ovules.

Its subcellular location is the nucleus. It catalyses the reaction L-lysyl-[histone] + S-adenosyl-L-methionine = N(6)-methyl-L-lysyl-[histone] + S-adenosyl-L-homocysteine + H(+). In terms of biological role, polycomb group (PcG) protein. Catalytic subunit of some PcG multiprotein complex, which methylates 'Lys-27' of histone H3, leading to transcriptional repression of the affected target genes, mainly abscisic acid (ABA) responsive elements. Required to regulate floral development by repressing the AGAMOUS homeotic gene in leaves, inflorescence stems and flowers. Together with ATX1, modulates AG nucleosome methylation statement. Regulates the antero-posterior organization of the endosperm, as well as the division and elongation rates of leaf cells. PcG proteins act by forming multiprotein complexes, which are required to maintain the transcriptionally repressive state of homeotic genes throughout development. PcG proteins are not required to initiate repression, but to maintain it during later stages of development. Forms a nuclear complex with EZA1/SWN and HXK1 to target common glucose-responsive genes and regulate glucose signaling by glucose-mediated gene repression. Affects the recruitment of HXK1 to the target chromatin. This is Histone-lysine N-methyltransferase CLF from Arabidopsis thaliana (Mouse-ear cress).